Consider the following 355-residue polypeptide: Endonuclease III homolog (355 aa).

The short motif at proline 44–glutamine 50 is the Nuclear localization signal element. The HhH domain maps to phenylalanine 122–serine 149. Lysine 142 acts as the Nucleophile; for N-glycosylase activity in catalysis. The [4Fe-4S] cluster site is built by cysteine 210, cysteine 217, cysteine 220, and cysteine 228. The Nuclear localization signal motif lies at lysine 252–proline 255. The segment at lysine 303–valine 355 is disordered. Over residues lysine 338–glutamine 349 the composition is skewed to polar residues.

The protein belongs to the Nth/MutY family. [4Fe-4S] cluster serves as cofactor.

Its subcellular location is the nucleus. The protein localises to the mitochondrion. The catalysed reaction is 2'-deoxyribonucleotide-(2'-deoxyribose 5'-phosphate)-2'-deoxyribonucleotide-DNA = a 3'-end 2'-deoxyribonucleotide-(2,3-dehydro-2,3-deoxyribose 5'-phosphate)-DNA + a 5'-end 5'-phospho-2'-deoxyribonucleoside-DNA + H(+). Its function is as follows. Bifunctional DNA N-glycosylase with associated apurinic/apyrimidinic (AP) lyase function that catalyzes the first step in base excision repair (BER), the primary repair pathway for the repair of oxidative DNA damage. The DNA N-glycosylase activity releases the damaged DNA base from DNA by cleaving the N-glycosidic bond, leaving an AP site. The AP-lyase activity cleaves the phosphodiester bond 3' to the AP site by a beta-elimination. Primarily recognizes and repairs oxidative base damage of pyrimidines. Also has 8-oxo-7,8-dihydroguanine (8-oxoG) DNA glycosylase activity. Also involved in the repair of 7-methylguanine lesions, although it cannot directly repair alkylated DNA bases. Probably does so via excision of methylformamidopyrimidine (mFapy) lesions, a spontaneous processing product of 7-methylguanine. The polypeptide is Endonuclease III homolog (nth1) (Schizosaccharomyces pombe (strain 972 / ATCC 24843) (Fission yeast)).